We begin with the raw amino-acid sequence, 1126 residues long: Ubiquitin carboxyl-terminal hydrolase 16/45 (1126 aa).

Residues 1 to 15 show a composition bias toward basic and acidic residues; that stretch reads MVKKRQADSRDHDCS. Positions 1-44 are disordered; that stretch reads MVKKRQADSRDHDCSTDSGNEDLHHRKGLGSPGQSDGATPTTAS. The span at 32–44 shows a compositional bias: polar residues; the sequence is PGQSDGATPTTAS. The UBP-type zinc finger occupies 43 to 181; sequence ASCQHIKKAV…ELVKKLAQKP (139 aa). Residues Cys-45, His-47, Cys-70, Cys-73, Cys-111, Cys-114, Cys-119, His-126, His-130, His-139, Cys-152, and Cys-155 each coordinate Zn(2+). Low complexity-rich tracts occupy residues 215–229 and 254–264; these read GGSF…SLAA and SSGLSTSDSLT. Positions 215-264 are disordered; that stretch reads GGSFDDSSSRGSLAAAGGGGGVGSSRNRQVAIPMPPPEPSSGLSTSDSLT. Residue Cys-315 is the Nucleophile of the active site. Disordered regions lie at residues 513 to 547, 570 to 762, and 795 to 833; these read KPQP…INTK, ASLG…SGSS, and EQGA…ARTK. Low complexity predominate over residues 524 to 539; the sequence is PELSLTSSSSSVTPST. The segment covering 586 to 598 has biased composition (basic residues); sequence QRKAKRAAKKRQK. Low complexity-rich tracts occupy residues 599-614 and 646-657; these read SSLN…GNEL and TEDSTTSSVTTS. Over residues 674 to 701 the composition is skewed to polar residues; the sequence is APSTNNVPSSTASLTAPSKTYMDSNGNA. The span at 705–718 shows a compositional bias: basic and acidic residues; sequence GEKRDDTPEHMDKD. A compositionally biased stretch (low complexity) spans 730–762; the sequence is ATSPAPTATNSSTSTSATGNNNSVAGSGLSGSS. Residues 807 to 816 show a composition bias toward basic and acidic residues; the sequence is GEAKAIEQPE. A compositionally biased stretch (low complexity) spans 821–830; the sequence is QAQAMAQAQA. His-984 serves as the catalytic Proton acceptor. The interval 1037-1089 is disordered; sequence LKVLDDSDDFSNSSSNSSTSDESQTPATPLEEQQTQQAQQPQQPQQLEEAANV. Over residues 1046–1086 the composition is skewed to low complexity; the sequence is FSNSSSNSSTSDESQTPATPLEEQQTQQAQQPQQPQQLEEA.

The protein belongs to the peptidase C19 family.

It catalyses the reaction Thiol-dependent hydrolysis of ester, thioester, amide, peptide and isopeptide bonds formed by the C-terminal Gly of ubiquitin (a 76-residue protein attached to proteins as an intracellular targeting signal).. Its function is as follows. Involved in the regulation of DNA damage repair. In Drosophila melanogaster (Fruit fly), this protein is Ubiquitin carboxyl-terminal hydrolase 16/45.